A 375-amino-acid chain; its full sequence is Citrate synthase (375 aa).

Catalysis depends on residues His266 and Asp317.

This sequence belongs to the citrate synthase family. In terms of assembly, homohexamer.

It carries out the reaction oxaloacetate + acetyl-CoA + H2O = citrate + CoA + H(+). It functions in the pathway carbohydrate metabolism; tricarboxylic acid cycle; isocitrate from oxaloacetate: step 1/2. Its activity is regulated as follows. Allosterically inhibited by NADH. The sequence is that of Citrate synthase (gltA) from Mycolicibacterium smegmatis (Mycobacterium smegmatis).